Here is a 290-residue protein sequence, read N- to C-terminus: Sodium/potassium-transporting ATPase subunit beta-2 (290 aa).

Residues 1–39 (MVIQKEKKSCGQVVEEWKEFVWNPRTHQFMGRTGTSWAF) lie on the Cytoplasmic side of the membrane. Residues 40–67 (ILLFYLVFYGFLTAMFSLTMWVMLQTVS) traverse the membrane as a helical; Signal-anchor for type II membrane protein segment. The Extracellular segment spans residues 68–290 (DHTPKYQDRL…VAFKLRINKT (223 aa)). Residues asparagine 96 and asparagine 118 are each glycosylated (N-linked (GlcNAc...) asparagine). Cysteine 129 and cysteine 150 are joined by a disulfide. N-linked (GlcNAc...) asparagine glycosylation occurs at asparagine 153. An intrachain disulfide couples cysteine 160 to cysteine 177. Residues asparagine 193, asparagine 197, asparagine 220, and asparagine 238 are each glycosylated (N-linked (GlcNAc...) asparagine). The interval 193 to 290 (NQSMNVTCVG…VAFKLRINKT (98 aa)) is immunoglobulin-like. Residues cysteine 200 and cysteine 261 are joined by a disulfide bond.

This sequence belongs to the X(+)/potassium ATPases subunit beta family. In terms of assembly, the sodium/potassium-transporting ATPase is composed of a catalytic alpha subunit, an auxiliary non-catalytic beta subunit and an additional regulatory subunit. Interacts with isoform 2 of BSG.

Its subcellular location is the cell membrane. This is the non-catalytic component of the active enzyme, which catalyzes the hydrolysis of ATP coupled with the exchange of Na(+) and K(+) ions across the plasma membrane. The exact function of the beta-2 subunit is not known. Functionally, mediates cell adhesion of neurons and astrocytes, and promotes neurite outgrowth. The polypeptide is Sodium/potassium-transporting ATPase subunit beta-2 (Atp1b2) (Mus musculus (Mouse)).